A 246-amino-acid chain; its full sequence is NH(3)-dependent NAD(+) synthetase (246 aa).

An ATP-binding site is contributed by 29 to 36 (GLSGGIDS). D35 lines the Mg(2+) pocket. A deamido-NAD(+)-binding site is contributed by R110. Residue T130 participates in ATP binding. Residue E135 coordinates Mg(2+). Residues K159 and S181 each contribute to the ATP site.

The protein belongs to the NAD synthetase family. As to quaternary structure, homodimer.

The catalysed reaction is deamido-NAD(+) + NH4(+) + ATP = AMP + diphosphate + NAD(+) + H(+). The protein operates within cofactor biosynthesis; NAD(+) biosynthesis; NAD(+) from deamido-NAD(+) (ammonia route): step 1/1. Catalyzes the ATP-dependent amidation of deamido-NAD to form NAD. Uses ammonia as a nitrogen source. This is NH(3)-dependent NAD(+) synthetase from Campylobacter jejuni subsp. jejuni serotype O:23/36 (strain 81-176).